The primary structure comprises 1075 residues: mRNA-binding protein PUF2 (1075 aa).

The disordered stretch occupies residues 38 to 68 (NTNARSVRVSDKRGRSSSTSPQKIGSYRTRA). Ser-72 bears the Phosphoserine mark. Low complexity predominate over residues 93–105 (TPVVVVPPTSSTP). The disordered stretch occupies residues 93 to 112 (TPVVVVPPTSSTPDSLNSTT). Ser-198 bears the Phosphoserine mark. One can recognise an RRM domain in the interval 316–402 (NTISISNVFP…APSTVSFARV (87 aa)). The PUM-HD domain occupies 511–872 (ELNHLLQNAL…QLLEEVGLSS (362 aa)). Pumilio repeat units follow at residues 574 to 611 (AIVM…IMLR), 612 to 647 (KCNK…NLVT), 649 to 683 (GVSD…FIFE), 684 to 719 (SVLS…QLLT), 722 to 758 (SLII…LILC), and 760 to 800 (KLVN…KIIH). A phosphoserine mark is found at Ser-872 and Ser-876. Disordered regions lie at residues 874 to 931 (GISP…LNFN) and 997 to 1075 (NNYN…SYGY). Low complexity-rich tracts occupy residues 901–916 (VSVS…HNSV), 997–1009 (NNYN…SQMN), and 1018–1063 (NNNN…NNNN).

It is found in the cytoplasm. Functionally, RNA-binding protein involved in post-transcriptional regulation. Negatively regulates expression of COX17 by binding to the 3'-UTR of COX17 mRNA. Promotes decay of COX17 mRNA by enhancing its rate of deadenylation and subsequent turnover. Predominantly binds to mRNAs encoding membrane-associated proteins with roles in transmembrane transport and vesicular trafficking. This Saccharomyces cerevisiae (strain ATCC 204508 / S288c) (Baker's yeast) protein is mRNA-binding protein PUF2 (PUF2).